The chain runs to 793 residues: Xaa-Pro dipeptidyl-peptidase (793 aa).

Catalysis depends on charge relay system residues Ser-363, Asp-483, and His-514.

Belongs to the peptidase S15 family. In terms of assembly, homodimer.

The protein resides in the cytoplasm. It carries out the reaction Hydrolyzes Xaa-Pro-|- bonds to release unblocked, N-terminal dipeptides from substrates including Ala-Pro-|-p-nitroanilide and (sequentially) Tyr-Pro-|-Phe-Pro-|-Gly-Pro-|-Ile.. In terms of biological role, removes N-terminal dipeptides sequentially from polypeptides having unsubstituted N-termini provided that the penultimate residue is proline. In Lactobacillus helveticus (strain DPC 4571), this protein is Xaa-Pro dipeptidyl-peptidase.